Consider the following 310-residue polypeptide: Homoserine O-acetyltransferase (310 aa).

Cys-142 functions as the Acyl-thioester intermediate in the catalytic mechanism. Substrate-binding residues include Lys-163 and Ser-192. The active-site Proton acceptor is His-235. Residue Glu-237 is part of the active site. A substrate-binding site is contributed by Arg-249.

The protein belongs to the MetA family.

It localises to the cytoplasm. The catalysed reaction is L-homoserine + acetyl-CoA = O-acetyl-L-homoserine + CoA. Its pathway is amino-acid biosynthesis; L-methionine biosynthesis via de novo pathway; O-acetyl-L-homoserine from L-homoserine: step 1/1. In terms of biological role, transfers an acetyl group from acetyl-CoA to L-homoserine, forming acetyl-L-homoserine. The sequence is that of Homoserine O-acetyltransferase from Parabacteroides distasonis (strain ATCC 8503 / DSM 20701 / CIP 104284 / JCM 5825 / NCTC 11152).